The sequence spans 192 residues: Cytochrome b-245 light chain (192 aa).

Topologically, residues 2-7 are cytoplasmic; sequence GQIEWA. Residues 8–30 form a helical membrane-spanning segment; the sequence is MWANEQALASGLILITGGIVATA. The Extracellular segment spans residues 31–35; it reads GQFAQ. The helical transmembrane segment at 36 to 53 threads the bilayer; that stretch reads WYLGAYSIAAGVLICLLE. The Cytoplasmic segment spans residues 54-69; that stretch reads YPRGKRSKGSTMERCG. An intramembrane segment occupies 70 to 80; it reads QKYLTRAVKVF. Residues 81-86 are Cytoplasmic-facing; it reads GPLTSN. A helical membrane pass occupies residues 87–104; that stretch reads YYIRAFLHLGLSVPAGFL. Residue Leu105 is a topological domain, extracellular. Residues 106–126 traverse the membrane as a helical segment; it reads ATILGTACLAIASSIYLLAAI. Over 127 to 192 the chain is Cytoplasmic; the sequence is HGEHWTPIET…NPMPVTDEVV (66 aa). The interval 134–192 is disordered; the sequence is IETKPKERPQVGGTIKQPPSNPPPRPPAEARKKPSEEEVAGVPGGGPQENPMPVTDEVV. Thr147 carries the post-translational modification Phosphothreonine. Residue Lys149 forms a Glycyl lysine isopeptide (Lys-Gly) (interchain with G-Cter in ubiquitin) linkage. The residue at position 168 (Ser168) is a Phosphoserine.

The protein belongs to the p22phox family. As to quaternary structure, component of the phagocyte NADPH oxidase core complex/cytochrome b558 complex, composed of CYBB (heavy chain (beta)) and CYBA (light chain (alpha)). Component of the phagocyte NADPH oxidase complex composed of an obligatory core heterodimer formed by the membrane proteins CYBA and CYBB and the cytosolic regulatory subunits NCF1/p47-phox, NCF2/p67-phox, NCF4/p40-phox and the small GTPase RAC1 or RAC2. Interacts with NCF1 (via SH3 domain). Interacts with SH3PXD2A. Interacts with DUOX1, DUOX2 and TPO. Interacts with NOX4; this interaction mediates superoxide generation. Interacts with calprotectin (S100A8/9). Interacts with GBP7. Interacts with NOXO1. Forms a heterodimer with NOX3 and is essential for activity and cell membrane localization of NOX3. Interacts with NOX1. Phosphorylation at Thr-147 enhances NADPH oxidase activity by promoting NCF1/p47-phox binding. Post-translationally, ubiquitinated at Lys-149 likely by RNF145.

The protein resides in the cell membrane. Functionally, subunit of NADPH oxidase complexes that is required for the NADPH oxidase activity that generates, in various cell types, superoxide from molecular oxygen utilizing NADPH as an electron donor. Subunit of the phagocyte NADPH oxidase complex that mediates the transfer of electrons from cytosolic NADPH to O2 to produce the superoxide anion (O2(-)). In the activated complex, electrons are first transferred from NADPH to flavin adenine dinucleotide (FAD) and subsequently transferred via two heme molecules to molecular oxygen, producing superoxide through an outer-sphere reaction. Activation of the NADPH oxidase complex is initiated by the assembly of cytosolic subunits of the NADPH oxidase complex with the core NADPH oxidase complex to form a complex at the plasma membrane or phagosomal membrane. This activation process is initiated by phosphorylation dependent binding of the cytosolic NCF1/p47-phox subunit to the C-terminus of CYBA/p22-phox. Aassociates with NOX3 to form a functional NADPH oxidase constitutively generating superoxide. This chain is Cytochrome b-245 light chain, found in Tursiops truncatus (Atlantic bottle-nosed dolphin).